The chain runs to 727 residues: NADH-ubiquinone oxidoreductase 75 kDa subunit, mitochondrial (727 aa).

Residues 1 to 23 constitute a mitochondrion transit peptide; the sequence is MLRIPVRKALVGLSKSPKGCVRT. The 2Fe-2S ferredoxin-type domain maps to 30 to 108; the sequence is NLIEVFVDGQ…GWNILTNSEK (79 aa). [2Fe-2S] cluster-binding residues include Cys-64, Cys-75, and Cys-78. Lys-84 carries the post-translational modification N6-acetyllysine. Cys-92 lines the [2Fe-2S] cluster pocket. A 4Fe-4S His(Cys)3-ligated-type domain is found at 108 to 147; the sequence is KSKKAREGVMELLLANHPLDCPICDQGGECDLQDQSMMFG. 8 residues coordinate [4Fe-4S] cluster: His-124, Cys-128, Cys-131, Cys-137, Cys-176, Cys-179, Cys-182, and Cys-226. Residues 245–301 enclose the 4Fe-4S Mo/W bis-MGD-type domain; the sequence is TRKTESIDVMDAVGSNIVVSTRTGEVMRILPRMHEDINEEWISDKTRFAYDGLKRQR. An N6-acetyllysine mark is found at Lys-467, Lys-499, and Lys-709.

This sequence belongs to the complex I 75 kDa subunit family. In terms of assembly, core subunit of respiratory chain NADH dehydrogenase (Complex I) which is composed of 45 different subunits. This is the largest subunit of complex I and it is a component of the iron-sulfur (IP) fragment of the enzyme. Complex I associates with ubiquinol-cytochrome reductase complex (Complex III) to form supercomplexes. Interacts with MDM2 and AKAP1. It depends on [2Fe-2S] cluster as a cofactor. [4Fe-4S] cluster serves as cofactor.

It is found in the mitochondrion inner membrane. The catalysed reaction is a ubiquinone + NADH + 5 H(+)(in) = a ubiquinol + NAD(+) + 4 H(+)(out). Its function is as follows. Core subunit of the mitochondrial membrane respiratory chain NADH dehydrogenase (Complex I) which catalyzes electron transfer from NADH through the respiratory chain, using ubiquinone as an electron acceptor. Essential for catalysing the entry and efficient transfer of electrons within complex I. Plays a key role in the assembly and stability of complex I and participates in the association of complex I with ubiquinol-cytochrome reductase complex (Complex III) to form supercomplexes. The protein is NADH-ubiquinone oxidoreductase 75 kDa subunit, mitochondrial (NDUFS1) of Pongo abelii (Sumatran orangutan).